The chain runs to 288 residues: Bifunctional protein FolD (288 aa).

NADP(+) is bound by residues 166–168 and I232; that span reads GAS.

The protein belongs to the tetrahydrofolate dehydrogenase/cyclohydrolase family. In terms of assembly, homodimer.

The enzyme catalyses (6R)-5,10-methylene-5,6,7,8-tetrahydrofolate + NADP(+) = (6R)-5,10-methenyltetrahydrofolate + NADPH. It carries out the reaction (6R)-5,10-methenyltetrahydrofolate + H2O = (6R)-10-formyltetrahydrofolate + H(+). Its pathway is one-carbon metabolism; tetrahydrofolate interconversion. Its function is as follows. Catalyzes the oxidation of 5,10-methylenetetrahydrofolate to 5,10-methenyltetrahydrofolate and then the hydrolysis of 5,10-methenyltetrahydrofolate to 10-formyltetrahydrofolate. This Erwinia tasmaniensis (strain DSM 17950 / CFBP 7177 / CIP 109463 / NCPPB 4357 / Et1/99) protein is Bifunctional protein FolD.